The sequence spans 726 residues: Procollagen-lysine,2-oxoglutarate 5-dioxygenase 1 (726 aa).

Positions 1–18 (MRLLLLLAPLGWLLLAET) are cleaved as a signal peptide. Residues asparagine 196 and asparagine 537 are each glycosylated (N-linked (GlcNAc...) asparagine). One can recognise a Fe2OG dioxygenase domain in the interval 635–726 (QFDLAFVVRY…RYIAVSFVDP (92 aa)). Histidine 655 and aspartate 657 together coordinate Fe cation. The N-linked (GlcNAc...) asparagine glycan is linked to asparagine 685. Histidine 707 lines the Fe cation pocket. Arginine 717 is a catalytic residue.

Homodimer. Identified in a complex with P3H3 and P3H4. Requires Fe(2+) as cofactor. It depends on L-ascorbate as a cofactor.

Its subcellular location is the rough endoplasmic reticulum membrane. It catalyses the reaction L-lysyl-[collagen] + 2-oxoglutarate + O2 = (5R)-5-hydroxy-L-lysyl-[collagen] + succinate + CO2. In terms of biological role, part of a complex composed of PLOD1, P3H3 and P3H4 that catalyzes hydroxylation of lysine residues in collagen alpha chains and is required for normal assembly and cross-linkling of collagen fibrils. Forms hydroxylysine residues in -Xaa-Lys-Gly- sequences in collagens. These hydroxylysines serve as sites of attachment for carbohydrate units and are essential for the stability of the intermolecular collagen cross-links. In Bos taurus (Bovine), this protein is Procollagen-lysine,2-oxoglutarate 5-dioxygenase 1 (PLOD1).